A 756-amino-acid polypeptide reads, in one-letter code: Cholesterol uptake protein 1 (756 aa).

Residues 1–18 (MRTSQAIFILIFLDSVRN) form the signal peptide. The Extracellular portion of the chain corresponds to 19 to 268 (QSPQVIPAKW…TIESSMKIFD (250 aa)). Asn-39 and Asn-63 each carry an N-linked (GlcNAc...) asparagine glycan. The short motif at 124 to 129 (VHYNFR) is the Cholesterol-binding sequence motif element. Asn-140, Asn-174, and Asn-257 each carry an N-linked (GlcNAc...) asparagine glycan. Residues 269–289 (YTIPIVFWACILLLVTIVVFV) form a helical membrane-spanning segment. Topologically, residues 290-373 (YHYFDGIWER…YEERELKYDV (84 aa)) are cytoplasmic. Residues 374 to 394 (YKIALAIIGIFYNITVLQLII) form a helical membrane-spanning segment. The Extracellular portion of the chain corresponds to 395–421 (SKAGSLRQSGDLDECTFNFQCARPLWY). Residues 422 to 442 (FVAFNNVVSNGGYVYFGTLII) traverse the membrane as a helical segment. Topologically, residues 443–473 (VMNYCRERSFRRLFAVQPTLAERYGLPQHSG) are cytoplasmic. The chain crosses the membrane as a helical span at residues 474–494 (LMTAIGLAVIMEGISSATYHV). Residues 495–498 (CPNN) are Extracellular-facing. The chain crosses the membrane as a helical span at residues 499 to 517 (INYQFDTALMYVIGMLGKL). At 518 to 530 (KIWSLRHPDMVVS) the chain is on the cytoplasmic side. The helical transmembrane segment at 531–551 (AYHAFGFLGVFLMAAIAGVYV) threads the bilayer. Residues 552 to 554 (HNM) lie on the Extracellular side of the membrane. Residues 555 to 575 (IFWALFSIIYIASMLLVSLEF) traverse the membrane as a helical segment. The Cholesterol-binding sequence motif motif lies at 570-578 (LVSLEFYFK). Topologically, residues 576-612 (YFKGIWTLNLRELRNSIRLSWVSSRHLSCVVPAYKAR) are cytoplasmic. A helical transmembrane segment spans residues 613–633 (FFVILLLNIANTAVVVYGLEA). Over 634 to 637 (HPKD) the chain is Extracellular. A helical membrane pass occupies residues 638-658 (FLSFLLIPFIGNLFIYIIYYI). Residues 659-671 (LMKMIYREKIPKR) lie on the Cytoplasmic side of the membrane. A helical transmembrane segment spans residues 672-692 (AIALLFAAVISWTCAGILFNQ). Topologically, residues 693-728 (RVSDWSKMPAISRELNKPCIFLNFYDNHDLWHLSSA) are extracellular. A helical transmembrane segment spans residues 729–749 (FAIFFSFTAINVIDDDLMFVM). The Cytoplasmic portion of the chain corresponds to 750–756 (RNTIRVF).

This sequence belongs to the SID1 family. As to expression, highly expressed along the intestine with expression also detected in the pharynx, especially at the terminal bulb, and in the excretory gland cells.

The protein resides in the cell membrane. It carries out the reaction cholesterol(in) = cholesterol(out). Its function is as follows. Cholesterol-binding protein which is involved in dietary cholesterol uptake from the environment. Does not play a role in double-stranded RNA transport in contrast to other SID1 family members. The polypeptide is Cholesterol uptake protein 1 (Caenorhabditis elegans).